The sequence spans 360 residues: Phospho-N-acetylmuramoyl-pentapeptide-transferase (360 aa).

Transmembrane regions (helical) follow at residues 27 to 47 (IVGLLTALIIALWMGPHLIAW), 71 to 91 (TPTMGGIMILFSIAVSTLLWA), 97 to 117 (YVWCVLLVLIGYGIIGFIDDY), 132 to 152 (WKYFWQSVLALAVAFSMYAIG), 168 to 188 (VMPQLGMLYILLAYFVIVGTS), 199 to 219 (GLAIMPTVFVAAGFALVAWAT), 236 to 256 (AGELVIVCTAIVGAGLGFLWF), 263 to 283 (VFMGDVGSLALGGALGTIAVL), 288 to 308 (FLLVIMGGVFVVETLSVILQV), and 338 to 358 (VIVRFWIISLMLVLIGLATLK).

This sequence belongs to the glycosyltransferase 4 family. MraY subfamily. Mg(2+) serves as cofactor.

It is found in the cell inner membrane. The catalysed reaction is UDP-N-acetyl-alpha-D-muramoyl-L-alanyl-gamma-D-glutamyl-meso-2,6-diaminopimeloyl-D-alanyl-D-alanine + di-trans,octa-cis-undecaprenyl phosphate = di-trans,octa-cis-undecaprenyl diphospho-N-acetyl-alpha-D-muramoyl-L-alanyl-D-glutamyl-meso-2,6-diaminopimeloyl-D-alanyl-D-alanine + UMP. It functions in the pathway cell wall biogenesis; peptidoglycan biosynthesis. Functionally, catalyzes the initial step of the lipid cycle reactions in the biosynthesis of the cell wall peptidoglycan: transfers peptidoglycan precursor phospho-MurNAc-pentapeptide from UDP-MurNAc-pentapeptide onto the lipid carrier undecaprenyl phosphate, yielding undecaprenyl-pyrophosphoryl-MurNAc-pentapeptide, known as lipid I. This Proteus mirabilis (strain HI4320) protein is Phospho-N-acetylmuramoyl-pentapeptide-transferase.